Reading from the N-terminus, the 1137-residue chain is Phytochrome C (1137 aa).

Low complexity predominate over residues 1–18 (MSSSRSNNRATCSRSSSA). The disordered stretch occupies residues 1 to 27 (MSSSRSNNRATCSRSSSARSKHSARVV). Residues 217 to 400 (NLSLLCDVLV…VFGIQINKEV (184 aa)) form the GAF domain. C322 is a phytochromobilin binding site. PAS domains are found at residues 620 to 690 (VTNE…LQGI) and 750 to 824 (IQGD…TKLS). Positions 904 to 1124 (YIRQELRNPL…IVLVEFPVAQ (221 aa)) constitute a Histidine kinase domain.

The protein belongs to the phytochrome family. As to quaternary structure, homodimer. Post-translationally, contains one covalently linked phytochromobilin chromophore.

Regulatory photoreceptor which exists in two forms that are reversibly interconvertible by light: the Pr form that absorbs maximally in the red region of the spectrum and the Pfr form that absorbs maximally in the far-red region. Photoconversion of Pr to Pfr induces an array of morphogenic responses, whereas reconversion of Pfr to Pr cancels the induction of those responses. Pfr controls the expression of a number of nuclear genes including those encoding the small subunit of ribulose-bisphosphate carboxylase, chlorophyll A/B binding protein, protochlorophyllide reductase, rRNA, etc. It also controls the expression of its own gene(s) in a negative feedback fashion. The protein is Phytochrome C (PHYC) of Oryza sativa subsp. indica (Rice).